We begin with the raw amino-acid sequence, 449 residues long: Exodeoxyribonuclease 7 large subunit (449 aa).

Belongs to the XseA family. In terms of assembly, heterooligomer composed of large and small subunits.

It is found in the cytoplasm. The enzyme catalyses Exonucleolytic cleavage in either 5'- to 3'- or 3'- to 5'-direction to yield nucleoside 5'-phosphates.. Its function is as follows. Bidirectionally degrades single-stranded DNA into large acid-insoluble oligonucleotides, which are then degraded further into small acid-soluble oligonucleotides. The sequence is that of Exodeoxyribonuclease 7 large subunit from Lacticaseibacillus paracasei (strain ATCC 334 / BCRC 17002 / CCUG 31169 / CIP 107868 / KCTC 3260 / NRRL B-441) (Lactobacillus paracasei).